A 456-amino-acid polypeptide reads, in one-letter code: MASRSLGGLSGIRGGGGGGGKKSLSARNAAVERRNLITVCRFSVKTLIDRSCFETIDDSSPEFNNFAAILEQILSHRLKGQVTWFGYESPRSFWDYIRVACRKVSQNCICSIENMENVSSSRAKGRAWIRVALMEKHLSEYISTALRDFKTTRRFYEDGAIVLGEEANMLAGMLLGLNAIDFSFCLKGEGLDGSFPAVIDYTPYLKYIQGSDSISSDEEELRTLGSSGSESSTPENVGPPFLMDENSWFNKCKRVKQKYQLTLEQKGYLEELLRLRENQLSESVSQNKILLQRIEDSDLAHKLEKEQLEYIIVELQDQLTVLKNNDLRSRQELTAHLTNQWPSPGALDVNAVALDTLLYRKHNKQWYEKSYQSLDQLSAEVSLSQTSLDPGQSQEGDGKQDTLNVMSEGKEDTPSLLGLCGSLTSVASYKSLTSLKSNDYLASPTTEMTSPGLTPS.

A disordered region spans residues 1–24 (MASRSLGGLSGIRGGGGGGGKKSL). A compositionally biased stretch (gly residues) spans 8–21 (GLSGIRGGGGGGGK). Position 13 is an omega-N-methylarginine (arginine 13). An RUN domain is found at 57-189 (DDSSPEFNNF…IDFSFCLKGE (133 aa)). Residues serine 215 and serine 216 each carry the phosphoserine modification. Residues 216–237 (SDEEELRTLGSSGSESSTPENV) form a disordered region. The span at 224–235 (LGSSGSESSTPE) shows a compositional bias: polar residues. Residues 300–325 (AHKLEKEQLEYIIVELQDQLTVLKNN) are a coiled coil. Positions 382–405 (SLSQTSLDPGQSQEGDGKQDTLNV) are enriched in polar residues. The interval 382 to 411 (SLSQTSLDPGQSQEGDGKQDTLNVMSEGKE) is disordered.

This sequence belongs to the RUNDC3 family. Interacts with RAP2A.

This Pongo abelii (Sumatran orangutan) protein is RUN domain-containing protein 3B (RUNDC3B).